The sequence spans 244 residues: 23S rRNA (guanosine-2'-O-)-methyltransferase RlmB (244 aa).

S-adenosyl-L-methionine is bound by residues glycine 196, isoleucine 216, and leucine 225.

It belongs to the class IV-like SAM-binding methyltransferase superfamily. RNA methyltransferase TrmH family. RlmB subfamily. Homodimer.

The protein resides in the cytoplasm. The enzyme catalyses guanosine(2251) in 23S rRNA + S-adenosyl-L-methionine = 2'-O-methylguanosine(2251) in 23S rRNA + S-adenosyl-L-homocysteine + H(+). In terms of biological role, specifically methylates the ribose of guanosine 2251 in 23S rRNA. In Photorhabdus laumondii subsp. laumondii (strain DSM 15139 / CIP 105565 / TT01) (Photorhabdus luminescens subsp. laumondii), this protein is 23S rRNA (guanosine-2'-O-)-methyltransferase RlmB.